The primary structure comprises 337 residues: MENLKALTEQALAEVAKTEDLAGLDAIRVNYLGKKGEITAQLKNLGGLSPEERPAAGAKINEAKQLVQNHISERKAALEAQAISAKLAAESIDVTLAGRQPEVGGLHPVTRTLRRISEIFTAVGYDVAEGPEIEDDFHNFEALNIPGHHPARAMHDTFYISPSHVLRTHTSPVQVRTMKSQEPPIKVICPGRVYRCDSDLTHTPMFHQVEGLVVDKNVSFADLKGTVDQFLKSFFEADVPVRFRPSYFPFTEPSAEVDIQCTNCGGEGCRICKQTGWLEIMGCGMVHPKVFESCGVDAEEYTGLAFGIGVERLAMLRYGVNDLRLFFENDLDFLNQF.

Residue E252 coordinates Mg(2+).

It belongs to the class-II aminoacyl-tRNA synthetase family. Phe-tRNA synthetase alpha subunit type 1 subfamily. In terms of assembly, tetramer of two alpha and two beta subunits. Mg(2+) serves as cofactor.

Its subcellular location is the cytoplasm. The catalysed reaction is tRNA(Phe) + L-phenylalanine + ATP = L-phenylalanyl-tRNA(Phe) + AMP + diphosphate + H(+). In Saccharophagus degradans (strain 2-40 / ATCC 43961 / DSM 17024), this protein is Phenylalanine--tRNA ligase alpha subunit.